The chain runs to 354 residues: Peptide chain release factor 1 (354 aa).

Gln-232 carries the N5-methylglutamine modification.

The protein belongs to the prokaryotic/mitochondrial release factor family. Methylated by PrmC. Methylation increases the termination efficiency of RF1.

It is found in the cytoplasm. In terms of biological role, peptide chain release factor 1 directs the termination of translation in response to the peptide chain termination codons UAG and UAA. The polypeptide is Peptide chain release factor 1 (Jannaschia sp. (strain CCS1)).